Reading from the N-terminus, the 347-residue chain is Dihydroorotase (347 aa).

Zn(2+) is bound by residues H14 and H16. Substrate is bound by residues 16–18 (HLR) and N42. Residues K100, H137, and H175 each contribute to the Zn(2+) site. Position 100 is an N6-carboxylysine (K100). Residue H137 participates in substrate binding. A substrate-binding site is contributed by L220. D248 serves as a coordination point for Zn(2+). D248 is an active-site residue. Substrate contacts are provided by H252 and A264.

This sequence belongs to the metallo-dependent hydrolases superfamily. DHOase family. Class II DHOase subfamily. As to quaternary structure, homodimer. Zn(2+) serves as cofactor.

The catalysed reaction is (S)-dihydroorotate + H2O = N-carbamoyl-L-aspartate + H(+). The protein operates within pyrimidine metabolism; UMP biosynthesis via de novo pathway; (S)-dihydroorotate from bicarbonate: step 3/3. Its function is as follows. Catalyzes the reversible cyclization of carbamoyl aspartate to dihydroorotate. This is Dihydroorotase from Pseudomonas syringae pv. syringae (strain B728a).